We begin with the raw amino-acid sequence, 383 residues long: Homoserine O-acetyltransferase (383 aa).

The region spanning 52 to 362 is the AB hydrolase-1 domain; it reads NAILVCHALT…PWGHDAFLLD (311 aa). The active-site Nucleophile is S158. R227 is a substrate binding site. Residues D323 and H356 contribute to the active site. Residue D357 participates in substrate binding.

This sequence belongs to the AB hydrolase superfamily. MetX family. As to quaternary structure, homodimer.

It localises to the cytoplasm. The enzyme catalyses L-homoserine + acetyl-CoA = O-acetyl-L-homoserine + CoA. The protein operates within amino-acid biosynthesis; L-methionine biosynthesis via de novo pathway; O-acetyl-L-homoserine from L-homoserine: step 1/1. Transfers an acetyl group from acetyl-CoA to L-homoserine, forming acetyl-L-homoserine. This is Homoserine O-acetyltransferase from Symbiobacterium thermophilum (strain DSM 24528 / JCM 14929 / IAM 14863 / T).